A 510-amino-acid chain; its full sequence is Lysine--tRNA ligase (510 aa).

Mg(2+) contacts are provided by glutamate 420 and glutamate 427.

It belongs to the class-II aminoacyl-tRNA synthetase family. In terms of assembly, homodimer. It depends on Mg(2+) as a cofactor.

It localises to the cytoplasm. The catalysed reaction is tRNA(Lys) + L-lysine + ATP = L-lysyl-tRNA(Lys) + AMP + diphosphate. The polypeptide is Lysine--tRNA ligase (Vibrio campbellii (strain ATCC BAA-1116)).